A 290-amino-acid polypeptide reads, in one-letter code: MFTRSLTRLQPQLFSRRLITSSRIPKYSSFLNQSPVNIIKRNYVIIHKQRKKEPVLRYLFYMIVLSWGFIYYVANRVDKKTVKKDFSEREFQQYEEATGVKRRNKLISGDLSSKYKFYVIPYINDNEQLDKIVNLLKSKDEGTHVKIIDPSELIEQQKQDEGLRYHYLLHDLEEQKRPYPQGLITALVKQEINNYSNTRQGTFETNFIIKNYPQTTAEAIKFENDVADVQKCLILHFDMLNELPKYKNEEEQRAIQNVDGYFDSVGRAKTLIDKFDPMDEEFEEIMMEDL.

Residues Met-1 to Lys-26 constitute a mitochondrion transit peptide. The chain crosses the membrane as a helical span at residues Val-55–Ala-74.

Belongs to the AIM36 family.

Its subcellular location is the mitochondrion membrane. In Candida tropicalis (strain ATCC MYA-3404 / T1) (Yeast), this protein is Altered inheritance of mitochondria protein 36, mitochondrial (AIM36).